A 526-amino-acid chain; its full sequence is tRNA modification GTPase MSS1, mitochondrial (526 aa).

The transit peptide at 1 to 19 directs the protein to the mitochondrion; the sequence is MNSASFLQSRLISRSFLVR. The region spanning 274–444 is the TrmE-type G domain; it reads GIKLVLLGAP…LISTLTSNFE (171 aa). GTP is bound by residues 281 to 288, 328 to 332, and 394 to 397; these read GAPNVGKS, DTAGI, and NKSD.

It belongs to the TRAFAC class TrmE-Era-EngA-EngB-Septin-like GTPase superfamily. TrmE GTPase family. In terms of assembly, forms a heterodimer with MTO1.

It localises to the mitochondrion. In terms of biological role, GTPase involved in the 5-carboxymethylaminomethyl modification (mnm(5)s(2)U34) of the wobble uridine base in mitochondrial tRNAs. Involved in the expression of cytochrome c oxidase subunit 1 (COX1). Works in association with the small subunit of mitoribosomes. The protein is tRNA modification GTPase MSS1, mitochondrial (MSS1) of Saccharomyces cerevisiae (strain ATCC 204508 / S288c) (Baker's yeast).